The following is a 397-amino-acid chain: Protein-glutamate methylesterase/protein-glutamine glutaminase of group 2 operon (397 aa).

The region spanning 21-139 is the Response regulatory domain; sequence RVMIVDDSVV…EASAADTFHH (119 aa). 4-aspartylphosphate is present on aspartate 72. The CheB-type methylesterase domain occupies 199–388; the sequence is PFSTLAPKVL…LPLNQIGAKV (190 aa). Active-site residues include serine 213, histidine 241, and aspartate 337.

The protein belongs to the CheB family. Post-translationally, phosphorylated by CheA. Phosphorylation of the N-terminal regulatory domain activates the methylesterase activity.

Its subcellular location is the cytoplasm. The catalysed reaction is [protein]-L-glutamate 5-O-methyl ester + H2O = L-glutamyl-[protein] + methanol + H(+). The enzyme catalyses L-glutaminyl-[protein] + H2O = L-glutamyl-[protein] + NH4(+). In terms of biological role, involved in chemotaxis. Part of a chemotaxis signal transduction system that modulates chemotaxis in response to various stimuli. Catalyzes the demethylation of specific methylglutamate residues introduced into the chemoreceptors (methyl-accepting chemotaxis proteins or MCP) by CheR. Also mediates the irreversible deamidation of specific glutamine residues to glutamic acid. The chain is Protein-glutamate methylesterase/protein-glutamine glutaminase of group 2 operon from Bradyrhizobium diazoefficiens (strain JCM 10833 / BCRC 13528 / IAM 13628 / NBRC 14792 / USDA 110).